The sequence spans 495 residues: Nitrogen fixation regulatory protein (495 aa).

The PAS 1 domain maps to 23–93; it reads HPGLFFTMVE…QEMWQTLLQR (71 aa). One can recognise a PAC domain in the interval 94-148; it reads QPWRGQLINQARDGGLYLVDIDITPVLNPQGELEHYLAMQRDISVSYTLEQRLRN. The PAS 2; truncated domain maps to 151 to 174; sequence TLMEAVLNNIPAAVVVVDEQDRVV.

FAD is required as a cofactor.

Functionally, required for the inhibition of NifA activity in response to oxygen and low level of fixed nitrogen. This chain is Nitrogen fixation regulatory protein (nifL), found in Klebsiella pneumoniae.